The following is a 207-amino-acid chain: Glycerol-3-phosphate acyltransferase (207 aa).

Transmembrane regions (helical) follow at residues 8 to 28 (NIVF…LILA), 64 to 84 (LGIA…LVGI), 92 to 112 (TLWA…YLGL), 122 to 142 (LGVY…VWIV), 154 to 174 (SLLG…GLGI), and 176 to 196 (SNIP…PNIV).

It belongs to the PlsY family. As to quaternary structure, probably interacts with PlsX.

The protein localises to the cell inner membrane. The catalysed reaction is an acyl phosphate + sn-glycerol 3-phosphate = a 1-acyl-sn-glycero-3-phosphate + phosphate. Its pathway is lipid metabolism; phospholipid metabolism. Functionally, catalyzes the transfer of an acyl group from acyl-phosphate (acyl-PO(4)) to glycerol-3-phosphate (G3P) to form lysophosphatidic acid (LPA). This enzyme utilizes acyl-phosphate as fatty acyl donor, but not acyl-CoA or acyl-ACP. The sequence is that of Glycerol-3-phosphate acyltransferase from Aliarcobacter butzleri (strain RM4018) (Arcobacter butzleri).